We begin with the raw amino-acid sequence, 235 residues long: Mediator of RNA polymerase II transcription subunit 6 (235 aa).

Belongs to the Mediator complex subunit 6 family. As to quaternary structure, component of the Mediator complex.

The protein localises to the nucleus. Its function is as follows. Component of the Mediator complex, a coactivator involved in the regulated transcription of nearly all RNA polymerase II-dependent genes. Mediator functions as a bridge to convey information from gene-specific regulatory proteins to the basal RNA polymerase II transcription machinery. Mediator is recruited to promoters by direct interactions with regulatory proteins and serves as a scaffold for the assembly of a functional preinitiation complex with RNA polymerase II and the general transcription factors. This is Mediator of RNA polymerase II transcription subunit 6 (MED6) from Eremothecium gossypii (strain ATCC 10895 / CBS 109.51 / FGSC 9923 / NRRL Y-1056) (Yeast).